A 153-amino-acid chain; its full sequence is Transcriptional repressor NrdR (153 aa).

The segment at 3–34 (CPYCNADDTKVIDSRLAAEGAQVRRRRQCNQC) is a zinc-finger region. Residues 49-139 (PRIIKSNGRI…VYRDFQDIEA (91 aa)) enclose the ATP-cone domain.

The protein belongs to the NrdR family. Zn(2+) is required as a cofactor.

Its function is as follows. Negatively regulates transcription of bacterial ribonucleotide reductase nrd genes and operons by binding to NrdR-boxes. In Psychrobacter sp. (strain PRwf-1), this protein is Transcriptional repressor NrdR.